A 380-amino-acid chain; its full sequence is Glutamyl-tRNA reductase 1 (380 aa).

Substrate contacts are provided by residues 42–45, Ser93, 98–100, and Gln104; these read TCNR and ETD. Catalysis depends on Cys43, which acts as the Nucleophile. 172-177 is a binding site for NADP(+); that stretch reads GAGAVG.

Belongs to the glutamyl-tRNA reductase family. In terms of assembly, homodimer.

It carries out the reaction (S)-4-amino-5-oxopentanoate + tRNA(Glu) + NADP(+) = L-glutamyl-tRNA(Glu) + NADPH + H(+). The protein operates within porphyrin-containing compound metabolism; protoporphyrin-IX biosynthesis; 5-aminolevulinate from L-glutamyl-tRNA(Glu): step 1/2. In terms of biological role, catalyzes the NADPH-dependent reduction of glutamyl-tRNA(Glu) to glutamate 1-semialdehyde (GSA). This chain is Glutamyl-tRNA reductase 1, found in Pyrobaculum calidifontis (strain DSM 21063 / JCM 11548 / VA1).